We begin with the raw amino-acid sequence, 248 residues long: MQQHPMPDSLPGAAFWEALGWTPEPAQLGQLKALQDLLRSWNSRVNLTRLVEGDDYWINQVFDSLWPLQTELRSPHQSRLAIDVGTGGGFPGLAVAIAMPGARMTLLDSVGRKTAAVQAMVNDLGLSDRVSVRTDRIESAGHDRTLRGGFDLAMARAVAAAPVVAEYLVPLLKPDGNALLYRGQWGDTDLRQLKRALVPLNAQLSSSQHCQLPAERGVRHLIRLQPVSPCPRQFPRAVGVPSRQPLGG.

Residues glycine 85, phenylalanine 90, isoleucine 137 to glutamate 138, and arginine 156 contribute to the S-adenosyl-L-methionine site.

Belongs to the methyltransferase superfamily. RNA methyltransferase RsmG family.

The protein localises to the cytoplasm. Functionally, specifically methylates the N7 position of a guanine in 16S rRNA. The polypeptide is Ribosomal RNA small subunit methyltransferase G (Parasynechococcus marenigrum (strain WH8102)).